Consider the following 388-residue polypeptide: Chorismate synthase (388 aa).

NADP(+) is bound by residues Arg-39 and Arg-45. Residues 132–134, 251–252, Gly-296, 311–315, and Arg-337 each bind FMN; these read RSS, NA, and KPIPT.

Belongs to the chorismate synthase family. Homotetramer. FMNH2 is required as a cofactor.

It carries out the reaction 5-O-(1-carboxyvinyl)-3-phosphoshikimate = chorismate + phosphate. It participates in metabolic intermediate biosynthesis; chorismate biosynthesis; chorismate from D-erythrose 4-phosphate and phosphoenolpyruvate: step 7/7. Functionally, catalyzes the anti-1,4-elimination of the C-3 phosphate and the C-6 proR hydrogen from 5-enolpyruvylshikimate-3-phosphate (EPSP) to yield chorismate, which is the branch point compound that serves as the starting substrate for the three terminal pathways of aromatic amino acid biosynthesis. This reaction introduces a second double bond into the aromatic ring system. In Staphylococcus aureus (strain MW2), this protein is Chorismate synthase.